A 660-amino-acid polypeptide reads, in one-letter code: Arginine--tRNA ligase, cytoplasmic (660 aa).

The could be involved in the assembly of the multisynthetase complex stretch occupies residues 1–72 (MELPVCFYEE…LEEKKKSSKS (72 aa)). L-arginine-binding positions include 200–202 (SPN), His211, Tyr384, Asp388, and Gln412. The short motif at 201–212 (PNIAKEMHVGHL) is the 'HIGH' region element. Residues 529–543 (NTAAYLLYAYTRIRS) are interaction with tRNA.

Belongs to the class-I aminoacyl-tRNA synthetase family. As to quaternary structure, monomer; also part of a multisubunit complex that groups tRNA ligases for Arg, Asp, Glu, Gln, Ile, Leu, Lys, Met and Pro.

It is found in the cytoplasm. The protein localises to the cytosol. The enzyme catalyses tRNA(Arg) + L-arginine + ATP = L-arginyl-tRNA(Arg) + AMP + diphosphate. Functionally, forms part of a macromolecular complex that catalyzes the attachment of specific amino acids to cognate tRNAs during protein synthesis. The polypeptide is Arginine--tRNA ligase, cytoplasmic (rars1) (Xenopus tropicalis (Western clawed frog)).